The sequence spans 198 residues: MADQRQRSLSTSGESLYHVLGLDKNATSDDIKKSYRKLALKYHPDKNPDNPEAADKFKEINNAHAILTDATKRNIYDKYGSLGLYVAEQFGEENVNTYFVLSSWWAKALFVFCGLLTCCYCCCCLCCCFNCCCGKCKPKAPEGEETEFYVSPEDLEAQLQSDEREATDTPIVIQPASATETTQLTADSHPSYHTDGFN.

Ser-8, Ser-10, Ser-12, and Ser-15 each carry phosphoserine. The J domain maps to 13–82 (GESLYHVLGL…RNIYDKYGSL (70 aa)). A Phosphotyrosine modification is found at Tyr-17. At Lys-56 the chain carries N6-acetyllysine. Ser-151 carries the phosphoserine modification.

Oligomers. Homodimer. Interacts with the chaperone complex consisting of HSC70 and SGTA. Interacts with ZDHHC13 (via ANK repeats). Interacts with ZDHHC17 (via ANK repeats). Interacts with SYT1, SYT5 and SYT7, and with SYT9, forming a complex with SNAP25. Post-translationally, ser-10 phosphorylation induces an order-to-disorder transition triggering the interaction with Lys-58. This conformational switch modulates DNAJC5's cellular functions by reducing binding to syntaxin and synaptogamin without altering HSC70 interactions. In terms of processing, palmitoylated. Could be palmitoylated by DHHC3, DHHC7, DHHC15 and DHHC17. Palmitoylation occurs probably in the cysteine-rich domain and regulates DNAJC5 membrane attachment. In terms of tissue distribution, expressed in pancreas, kidney, skeletal muscle, liver, lung, placenta, brain and heart.

It is found in the cytoplasm. Its subcellular location is the cytosol. The protein localises to the membrane. It localises to the cytoplasmic vesicle. The protein resides in the secretory vesicle. It is found in the chromaffin granule membrane. Its subcellular location is the melanosome. The protein localises to the cell membrane. In terms of biological role, acts as a general chaperone in regulated exocytosis. Acts as a co-chaperone for the SNARE protein SNAP-25. Involved in the calcium-mediated control of a late stage of exocytosis. May have an important role in presynaptic function. May be involved in calcium-dependent neurotransmitter release at nerve endings. The protein is DnaJ homolog subfamily C member 5 of Homo sapiens (Human).